We begin with the raw amino-acid sequence, 257 residues long: Protein KlaA (257 aa).

In terms of biological role, belongs to the kla operon, which is associated with cryptic tellurite resistance, and IncW plasmid fertility inhibition. In Escherichia coli, this protein is Protein KlaA (klaA).